A 2053-amino-acid polypeptide reads, in one-letter code: Cell adhesion molecule DSCAML1 (2053 aa).

The signal sequence occupies residues 1-18 (MWLVTFLLLLDSLHKARP). 9 consecutive Ig-like C2-type domains span residues 19-119 (EDVG…NIRI), 115-217 (PNIR…ARLS), 226-310 (PTIL…GILT), 314-396 (PLHV…QTAQ), 408-501 (PRIV…ARIN), 506-586 (PSIR…LSIS), 596-685 (PPLI…RQLI), 690-784 (PRFV…MFLT), and 788-885 (PAMI…LTVQ). The Extracellular portion of the chain corresponds to 19–1591 (EDVGTSLYFV…AQGEGDDVKK (1573 aa)). Disulfide bonds link Cys47–Cys103, Cys146–Cys198, Cys247–Cys294, Cys336–Cys386, Cys429–Cys485, Cys526–Cys575, and Cys617–Cys669. The N-linked (GlcNAc...) asparagine glycan is linked to Asn79. Residues Asn368 and Asn471 are each glycosylated (N-linked (GlcNAc...) asparagine). Asn666 and Asn710 each carry an N-linked (GlcNAc...) asparagine glycan. A disulfide bond links Cys711 and Cys767. A glycan (N-linked (GlcNAc...) asparagine) is linked at Asn809. Cys810 and Cys867 are joined by a disulfide. Fibronectin type-III domains follow at residues 887 to 984 (PPDP…TEEA), 989 to 1088 (PPMD…TLED), 1093 to 1189 (PPEN…TKED), and 1193 to 1288 (PPAG…AGKA). N-linked (GlcNAc...) asparagine glycans are attached at residues Asn1144 and Asn1162. The region spanning 1278-1377 (EKVTIEPAGK…TGGFDTIIVN (100 aa)) is the Ig-like C2-type 10 domain. Cysteines 1311 and 1363 form a disulfide. N-linked (GlcNAc...) asparagine glycosylation occurs at Asn1345. 2 consecutive Fibronectin type-III domains span residues 1383-1477 (PPDQ…THGR) and 1478-1578 (EPSF…TIPP). Residue Asn1561 is glycosylated (N-linked (GlcNAc...) asparagine). A helical transmembrane segment spans residues 1592–1612 (LFTIGCPVILATLGVALLFVV). The Cytoplasmic portion of the chain corresponds to 1613–2053 (RKKRKEKRLK…GAYSKSYTLV (441 aa)). Disordered stretches follow at residues 1716-1741 (LIDM…HSTR), 1773-1803 (HGVT…STES), 1840-1862 (SSDQ…STPS), and 1974-2053 (LAMP…YTLV). The segment covering 1732 to 1741 (KNVKSAHSTR) has biased composition (basic residues). Polar residues predominate over residues 1773–1789 (HGVTVTESDSYSASLSQ). A compositionally biased stretch (pro residues) spans 1977–1993 (PAPPAGTAPPAPGPTPS).

As to quaternary structure, homodimer; mediates homophilic interactions to promote cell adhesion. In terms of tissue distribution, in the retina, expressed in the rod photoreceptors, AII amacrine cells and rod bipolar cells (at protein level).

Its subcellular location is the cell membrane. It localises to the synapse. Functionally, cell adhesion molecule that plays a role in neuronal self-avoidance. Promotes repulsion between specific neuronal processes of either the same cell or the same subtype of cells. Promotes both isoneuronal self-avoidance for creating an orderly neurite arborization in retinal rod bipolar cells and heteroneuronal self-avoidance to maintain mosaic spacing between AII amacrine cells. Adhesion molecule that promotes lamina-specific synaptic connections in the retina: expressed in specific subsets of interneurons and retinal ganglion cells (RGCs) and promotes synaptic connectivity via homophilic interactions. The sequence is that of Cell adhesion molecule DSCAML1 (Dscaml1) from Mus musculus (Mouse).